Here is a 637-residue protein sequence, read N- to C-terminus: 1-deoxy-D-xylulose-5-phosphate synthase (637 aa).

Residues His-76 and 117–119 each bind thiamine diphosphate; that span reads GHS. Position 148 (Asp-148) interacts with Mg(2+). Thiamine diphosphate contacts are provided by residues 149 to 150, Asn-177, Tyr-294, and Glu-381; that span reads GA. Residue Asn-177 participates in Mg(2+) binding.

The protein belongs to the transketolase family. DXPS subfamily. In terms of assembly, homodimer. Requires Mg(2+) as cofactor. Thiamine diphosphate is required as a cofactor.

It catalyses the reaction D-glyceraldehyde 3-phosphate + pyruvate + H(+) = 1-deoxy-D-xylulose 5-phosphate + CO2. It functions in the pathway metabolic intermediate biosynthesis; 1-deoxy-D-xylulose 5-phosphate biosynthesis; 1-deoxy-D-xylulose 5-phosphate from D-glyceraldehyde 3-phosphate and pyruvate: step 1/1. Functionally, catalyzes the acyloin condensation reaction between C atoms 2 and 3 of pyruvate and glyceraldehyde 3-phosphate to yield 1-deoxy-D-xylulose-5-phosphate (DXP). This Neisseria meningitidis serogroup A / serotype 4A (strain DSM 15465 / Z2491) protein is 1-deoxy-D-xylulose-5-phosphate synthase.